A 513-amino-acid chain; its full sequence is Putative zinc finger CCCH domain-containing protein 51 (513 aa).

A disordered region spans residues 155–180; that stretch reads SMPRNSPNAGRNLVGHPHSSSKSSSK. Residues 170 to 180 show a composition bias toward low complexity; the sequence is HPHSSSKSSSK. The segment at 176 to 204 adopts a C3H1-type zinc-finger fold; that stretch reads KSSSKPCHFHFFRGYCKKGVNCQFFHGSV. Residues 218–299 enclose the HTH OST-type domain; the sequence is SLSKLDMEIR…HGQYHVVLVE (82 aa). Residues 325-411 form the RRM domain; that stretch reads NQIYMTFPVH…SELRMTWLKS (87 aa).

The sequence is that of Putative zinc finger CCCH domain-containing protein 51 from Oryza sativa subsp. japonica (Rice).